Here is a 203-residue protein sequence, read N- to C-terminus: Peptidyl-tRNA hydrolase (203 aa).

Y14 lines the tRNA pocket. The active-site Proton acceptor is H19. Residues Y64, N66, and N112 each contribute to the tRNA site.

Belongs to the PTH family. As to quaternary structure, monomer.

Its subcellular location is the cytoplasm. The enzyme catalyses an N-acyl-L-alpha-aminoacyl-tRNA + H2O = an N-acyl-L-amino acid + a tRNA + H(+). Hydrolyzes ribosome-free peptidyl-tRNAs (with 1 or more amino acids incorporated), which drop off the ribosome during protein synthesis, or as a result of ribosome stalling. In terms of biological role, catalyzes the release of premature peptidyl moieties from peptidyl-tRNA molecules trapped in stalled 50S ribosomal subunits, and thus maintains levels of free tRNAs and 50S ribosomes. The polypeptide is Peptidyl-tRNA hydrolase (Methylobacterium nodulans (strain LMG 21967 / CNCM I-2342 / ORS 2060)).